A 203-amino-acid chain; its full sequence is Pyridoxal 5'-phosphate synthase subunit PdxT (203 aa).

54 to 56 (GES) is a binding site for L-glutamine. Residue cysteine 86 is the Nucleophile of the active site. Residues arginine 113 and 141 to 142 (IR) contribute to the L-glutamine site. Residues histidine 177 and glutamate 179 each act as charge relay system in the active site.

The protein belongs to the glutaminase PdxT/SNO family. In the presence of PdxS, forms a dodecamer of heterodimers. Only shows activity in the heterodimer.

It catalyses the reaction aldehydo-D-ribose 5-phosphate + D-glyceraldehyde 3-phosphate + L-glutamine = pyridoxal 5'-phosphate + L-glutamate + phosphate + 3 H2O + H(+). The catalysed reaction is L-glutamine + H2O = L-glutamate + NH4(+). Its pathway is cofactor biosynthesis; pyridoxal 5'-phosphate biosynthesis. Functionally, catalyzes the hydrolysis of glutamine to glutamate and ammonia as part of the biosynthesis of pyridoxal 5'-phosphate. The resulting ammonia molecule is channeled to the active site of PdxS. This chain is Pyridoxal 5'-phosphate synthase subunit PdxT, found in Halobacterium salinarum (strain ATCC 29341 / DSM 671 / R1).